The primary structure comprises 262 residues: Phosphate import ATP-binding protein PstB (262 aa).

Residues 16–257 (IDVRNLNFYY…PHRKETEDYI (242 aa)) enclose the ABC transporter domain. 48 to 55 (GPSGCGKS) contacts ATP.

It belongs to the ABC transporter superfamily. Phosphate importer (TC 3.A.1.7) family. As to quaternary structure, the complex is composed of two ATP-binding proteins (PstB), two transmembrane proteins (PstC and PstA) and a solute-binding protein (PstS).

The protein localises to the cell inner membrane. The catalysed reaction is phosphate(out) + ATP + H2O = ADP + 2 phosphate(in) + H(+). Its function is as follows. Part of the ABC transporter complex PstSACB involved in phosphate import. Responsible for energy coupling to the transport system. The protein is Phosphate import ATP-binding protein PstB of Cupriavidus pinatubonensis (strain JMP 134 / LMG 1197) (Cupriavidus necator (strain JMP 134)).